A 606-amino-acid polypeptide reads, in one-letter code: Aspartate--tRNA(Asp/Asn) ligase (606 aa).

Glutamate 187 is an L-aspartate binding site. Positions 211–214 (QQFK) are aspartate. Residues arginine 233 and histidine 461 each coordinate L-aspartate. 233-235 (RDE) contacts ATP. Glutamate 495 contacts ATP. Residue arginine 502 coordinates L-aspartate. Residue 547-550 (GLDR) participates in ATP binding.

Belongs to the class-II aminoacyl-tRNA synthetase family. Type 1 subfamily. As to quaternary structure, homodimer.

The protein resides in the cytoplasm. The enzyme catalyses tRNA(Asx) + L-aspartate + ATP = L-aspartyl-tRNA(Asx) + AMP + diphosphate. Functionally, aspartyl-tRNA synthetase with relaxed tRNA specificity since it is able to aspartylate not only its cognate tRNA(Asp) but also tRNA(Asn). Reaction proceeds in two steps: L-aspartate is first activated by ATP to form Asp-AMP and then transferred to the acceptor end of tRNA(Asp/Asn). This Chlorobium phaeobacteroides (strain DSM 266 / SMG 266 / 2430) protein is Aspartate--tRNA(Asp/Asn) ligase.